The following is a 926-amino-acid chain: MEQNIISTIRDECIRHRSKYLTIAQLTAIAEAKINEFIITGKAKDQDLSSLLDKCIDILSIYKKNSKDIKNIISCKNKGAMISSNSVMIIQLNYVYYKVIHIIVTTNIPHLSEFAKIKLHKSTSDEGNGNNNNNEFQLMNIYNTLLETLLKDENIAKIKSFIKSSIKQTKLNHEQEECNLMRTGSYITSNQLNSLISSSANSTSSQMEILLIDIRSRLEFNKSHIDTKNIICLEPISFKMSYSDHDLEKKSLITSPNSEIKMFQSRNLFKFIILYTDANEYNVKQQSVLLDILVNHSFEKPISDDFTKIFILESGFPGWLKSNYGSQVSSSSPSNNNIKDDSVYINGNTSGLSLQHLPKMSPSIRHSMDDSMKEMLVAPTPLNHLQQQQQQQSDNDHVLKRSSSFKKLFSNYTSPNPKNSNSNLYSISSLSISSSPSPLPLHSPDPVKGNSLPINYPETPHLWKNSETDFMTNQREQLNHNSFAHIAPINTKAITSPSRTATPKLQRFPQTISMNLNMNSNGHSSATSTIQPSCLSLSNNDSLDHTDVTPTSSHNYDLDFAVGLENLGNSCYMNCIIQCILGTHELTQIFLDDSYAKHININSKLGSKGILAKYFARLVHMMYKEQVDGSKKISISPIKFKLACGSVNSLFKTASQQDCQEFCQFLLDGLHEDLNQCGSNPPLKELSQEAEARREKLSLRIASSIEWERFLTTDFSVIVDLFQGQYASRLKCKVCSHTSTTYQPFTVLSIPIPKKNSRNNITIEDCFREFTKCENLEVDEQWLCPHCKKRQPSTKQLTITRLPRNLIVHLKRFDNLLNKNNDFVIYPFLLDLTPFWANDFDGVFPPGVNDDELPIRGQIPPFKYELYGVACHFGTLYGGHYTAYVKKGLKKGWLYFDDTKYKPVKNKADAINSNAYVLFYHRVYGV.

One can recognise a Rhodanese domain in the interval 205–328; the sequence is SQMEILLIDI…WLKSNYGSQV (124 aa). Position 443 is a phosphoserine (serine 443). The USP domain occupies 562-923; it reads VGLENLGNSC…NAYVLFYHRV (362 aa). Catalysis depends on cysteine 571, which acts as the Nucleophile. Histidine 880 (proton acceptor) is an active-site residue.

It belongs to the peptidase C19 family. In terms of assembly, interacts with BRO1, RFU1 and VPS32. Associates with the 26S proteasome.

Its subcellular location is the cytoplasm. It localises to the late endosome membrane. The enzyme catalyses Thiol-dependent hydrolysis of ester, thioester, amide, peptide and isopeptide bonds formed by the C-terminal Gly of ubiquitin (a 76-residue protein attached to proteins as an intracellular targeting signal).. Its activity is regulated as follows. RFU1 is an inhibitor of deubiquitination activity. In terms of biological role, ubiquitin thioesterase that acts at the late endosome/prevacuolar compartment to recover ubiquitin from ubiquitinated membrane proteins en route to the vacuole. Also removes ubiquitin from soluble proteins targeted to proteasomes. Is essential to maintain a normal level of free ubiquitin. Involved in the ammonium-induced down-regulation of the GAP1 permease and the UME3 destruction in response to oxidative stress. Has a role in the RAD9 checkpoint response to TOP1 poisons. Required for promoting coordination of DNA replication and avoids DNA overreplication. The chain is Ubiquitin carboxyl-terminal hydrolase 4 (DOA4) from Saccharomyces cerevisiae (strain YJM789) (Baker's yeast).